The sequence spans 116 residues: Mercuric transport protein MerT (116 aa).

The next 2 membrane-spanning stretches (helical) occupy residues 16 to 36 and 46 to 66; these read LAAILASACCLGPLVLIALGF and VLEPYRPIFIGAALVALFFAW. 2 residues coordinate Hg(2+): C24 and C25. C76 and C82 together coordinate Hg(2+). The helical transmembrane segment at 94 to 114 threads the bilayer; sequence IFWFVAVLVLVALGFPYVMPF.

This sequence belongs to the MerT family.

It localises to the cell inner membrane. In terms of biological role, involved in mercury resistance. Probably transfers a mercuric ion from the periplasmic Hg(2+)-binding protein MerP to the cytoplasmic mercuric reductase MerA. This Acinetobacter calcoaceticus protein is Mercuric transport protein MerT.